We begin with the raw amino-acid sequence, 159 residues long: Phosphopantetheine adenylyltransferase (159 aa).

Ser8 serves as a coordination point for substrate. ATP contacts are provided by residues 8-9 (SF) and His16. 3 residues coordinate substrate: Lys40, Leu72, and Arg86. ATP contacts are provided by residues 87–89 (GLR), Glu97, and 122–128 (YSFISSS).

Belongs to the bacterial CoaD family. In terms of assembly, homohexamer. The cofactor is Mg(2+).

The protein resides in the cytoplasm. It catalyses the reaction (R)-4'-phosphopantetheine + ATP + H(+) = 3'-dephospho-CoA + diphosphate. It participates in cofactor biosynthesis; coenzyme A biosynthesis; CoA from (R)-pantothenate: step 4/5. Its function is as follows. Reversibly transfers an adenylyl group from ATP to 4'-phosphopantetheine, yielding dephospho-CoA (dPCoA) and pyrophosphate. The sequence is that of Phosphopantetheine adenylyltransferase from Thermosipho melanesiensis (strain DSM 12029 / CIP 104789 / BI429).